Consider the following 435-residue polypeptide: Tryptophan synthase beta chain (435 aa).

Residue Lys92 is modified to N6-(pyridoxal phosphate)lysine.

It belongs to the TrpB family. Tetramer of two alpha and two beta chains. The cofactor is pyridoxal 5'-phosphate.

The enzyme catalyses (1S,2R)-1-C-(indol-3-yl)glycerol 3-phosphate + L-serine = D-glyceraldehyde 3-phosphate + L-tryptophan + H2O. It participates in amino-acid biosynthesis; L-tryptophan biosynthesis; L-tryptophan from chorismate: step 5/5. The beta subunit is responsible for the synthesis of L-tryptophan from indole and L-serine. The polypeptide is Tryptophan synthase beta chain (Albidiferax ferrireducens (strain ATCC BAA-621 / DSM 15236 / T118) (Rhodoferax ferrireducens)).